A 515-amino-acid polypeptide reads, in one-letter code: ATP synthase subunit alpha (515 aa).

171 to 178 (GDRQTGKT) is an ATP binding site.

It belongs to the ATPase alpha/beta chains family. F-type ATPases have 2 components, CF(1) - the catalytic core - and CF(0) - the membrane proton channel. CF(1) has five subunits: alpha(3), beta(3), gamma(1), delta(1), epsilon(1). CF(0) has three main subunits: a(1), b(2) and c(9-12). The alpha and beta chains form an alternating ring which encloses part of the gamma chain. CF(1) is attached to CF(0) by a central stalk formed by the gamma and epsilon chains, while a peripheral stalk is formed by the delta and b chains.

The protein localises to the cell membrane. The enzyme catalyses ATP + H2O + 4 H(+)(in) = ADP + phosphate + 5 H(+)(out). Functionally, produces ATP from ADP in the presence of a proton gradient across the membrane. The alpha chain is a regulatory subunit. The protein is ATP synthase subunit alpha of Stenotrophomonas maltophilia (strain K279a).